We begin with the raw amino-acid sequence, 121 residues long: Ribosome-binding factor A (121 aa).

Belongs to the RbfA family. As to quaternary structure, monomer. Binds 30S ribosomal subunits, but not 50S ribosomal subunits or 70S ribosomes.

Its subcellular location is the cytoplasm. Functionally, one of several proteins that assist in the late maturation steps of the functional core of the 30S ribosomal subunit. Associates with free 30S ribosomal subunits (but not with 30S subunits that are part of 70S ribosomes or polysomes). Required for efficient processing of 16S rRNA. May interact with the 5'-terminal helix region of 16S rRNA. This is Ribosome-binding factor A from Paraburkholderia phytofirmans (strain DSM 17436 / LMG 22146 / PsJN) (Burkholderia phytofirmans).